We begin with the raw amino-acid sequence, 751 residues long: Photosystem I P700 chlorophyll a apoprotein A1 (751 aa).

Helical transmembrane passes span 73–96 (VFSA…FHGA), 159–182 (LYST…FHFH), 198–222 (LNHH…HVSL), 294–312 (TAHH…GHMY), 349–372 (WHAQ…HHQY), 388–414 (LSLF…IFMI), 436–458 (AIIS…LYIH), and 533–551 (FLVH…LILL). [4Fe-4S] cluster is bound by residues Cys575 and Cys584. The next 2 helical transmembrane spans lie at 591–612 (HVFL…HFSW) and 665–687 (LSAY…MFLF). A chlorophyll a'-binding site is contributed by His676. Chlorophyll a contacts are provided by Met684 and Tyr692. Trp693 provides a ligand contact to phylloquinone. Residues 725–745 (AVGVAHYLLGGIATTWSFFLA) traverse the membrane as a helical segment.

The protein belongs to the PsaA/PsaB family. The PsaA/B heterodimer binds the P700 chlorophyll special pair and subsequent electron acceptors. PSI consists of a core antenna complex that captures photons, and an electron transfer chain that converts photonic excitation into a charge separation. The eukaryotic PSI reaction center is composed of at least 11 subunits. P700 is a chlorophyll a/chlorophyll a' dimer, A0 is one or more chlorophyll a, A1 is one or both phylloquinones and FX is a shared 4Fe-4S iron-sulfur center. is required as a cofactor.

It is found in the plastid. The protein resides in the chloroplast thylakoid membrane. It catalyses the reaction reduced [plastocyanin] + hnu + oxidized [2Fe-2S]-[ferredoxin] = oxidized [plastocyanin] + reduced [2Fe-2S]-[ferredoxin]. Functionally, psaA and PsaB bind P700, the primary electron donor of photosystem I (PSI), as well as the electron acceptors A0, A1 and FX. PSI is a plastocyanin/cytochrome c6-ferredoxin oxidoreductase, converting photonic excitation into a charge separation, which transfers an electron from the donor P700 chlorophyll pair to the spectroscopically characterized acceptors A0, A1, FX, FA and FB in turn. Oxidized P700 is reduced on the lumenal side of the thylakoid membrane by plastocyanin or cytochrome c6. The sequence is that of Photosystem I P700 chlorophyll a apoprotein A1 from Tupiella akineta (Green alga).